A 550-amino-acid chain; its full sequence is MKQAKIIGLSTVIALSGIILVACGSKTSEQKNIQFSIPTDVASLDTTILTDQYSYDVAGNVEEGLTRVDSKGNAALALAKSIDVSKDGLTYTVTLKDNLKWSNGDKLTAKDFVYSWKRAVDPKTGSEYAYLMGAVSGANDIISGKSSLDTLGIKAESDTEFTVTLAQPTPYFKFLLSEPVYYPLDQKVVDKYGKQYGTSSDKTVYNGPFMFKSDKAWTGTNKNFSIYANPNYYDKSAVKSKQIDFQVISNANTGAQLYKQGKLDFTLLSTTDLINANKKTEGYTVFKQARTDYIEYNQSGKNASSPDAQKALANQDIRQALNLATNRAEVVKTALPGSTAATSFTPVGMSKTSTGEDFATYAKQDYSYDPTKAKELWAKGLKELGLTKLSLSLEAAGDLAPSEATANFLQTAYQQNLPGLTVNLKLVPFKQRLNDAQNGNFDMVLSGWGGDYAEPSTFLQLFTTGQSYNDGKFSSKTYDDAFKAATTTPDVLEPAKVDEHYKAAEAALYEGSYINPIDFQANPALMNPKITGLEFHSTGLAYDLKSAYIK.

The N-terminal stretch at 1–22 (MKQAKIIGLSTVIALSGIILVA) is a signal peptide. The N-palmitoyl cysteine moiety is linked to residue Cys23. A lipid anchor (S-diacylglycerol cysteine) is attached at Cys23.

Belongs to the bacterial solute-binding protein 5 family. The complex is composed of two ATP-binding proteins (DppD and DppF), two transmembrane proteins (DppB and DppC) and a solute-binding protein (DppA).

It localises to the cell membrane. In terms of biological role, part of the ABC transporter DppABCDF involved in dipeptide transport. Binds di- and tripeptides with high affinity. Requires a free N-terminal alpha-amino group and an alpha-peptide bound contiguous with the N-terminal amino group, has a strong selectivity for L-residues, and shows preference for dipeptides containing methionine or arginine, followed by hydrophobic tripeptides consisting of leucine or valine residues. This chain is Dipeptide-binding protein, found in Lactococcus lactis subsp. cremoris (strain MG1363).